The primary structure comprises 92 residues: C-C motif chemokine 4 (92 aa).

Positions 1–23 (MKLCVTVLSLLMLVAAFCSPALS) are cleaved as a signal peptide. Cystine bridges form between cysteine 34–cysteine 58 and cysteine 35–cysteine 74.

Belongs to the intercrine beta (chemokine CC) family. In terms of assembly, homodimer and heterodimer of MIP-1-alpha(4-69) and MIP-1-beta(3-69). In terms of processing, N-terminal processed form MIP-1-beta(3-69) is produced by proteolytic cleavage after secretion from peripheral blood lymphocytes.

The protein localises to the secreted. Its function is as follows. Monokine with inflammatory and chemokinetic properties. Binds to CCR5. One of the major HIV-suppressive factors produced by CD8+ T-cells. Recombinant MIP-1-beta induces a dose-dependent inhibition of different strains of HIV-1, HIV-2, and simian immunodeficiency virus (SIV). The processed form MIP-1-beta(3-69) retains the abilities to induce down-modulation of surface expression of the chemokine receptor CCR5 and to inhibit the CCR5-mediated entry of HIV-1 in T-cells. MIP-1-beta(3-69) is also a ligand for CCR1 and CCR2 isoform B. The sequence is that of C-C motif chemokine 4 (CCL4) from Homo sapiens (Human).